Here is a 151-residue protein sequence, read N- to C-terminus: Small ribosomal subunit protein uS15 (151 aa).

The protein belongs to the universal ribosomal protein uS15 family. Component of the small ribosomal subunit.

It localises to the cytoplasm. In terms of biological role, component of the small ribosomal subunit. The ribosome is a large ribonucleoprotein complex responsible for the synthesis of proteins in the cell. This is Small ribosomal subunit protein uS15 (rps13) from Xenopus laevis (African clawed frog).